The chain runs to 31 residues: Cytochrome b6-f complex subunit 6 (31 aa).

The chain crosses the membrane as a helical span at residues 4–24 (ITSYFGFLLAALTITSALLIG).

This sequence belongs to the PetL family. As to quaternary structure, the 4 large subunits of the cytochrome b6-f complex are cytochrome b6, subunit IV (17 kDa polypeptide, PetD), cytochrome f and the Rieske protein, while the 4 small subunits are PetG, PetL, PetM and PetN. The complex functions as a dimer.

The protein resides in the plastid. It is found in the chloroplast thylakoid membrane. Its function is as follows. Component of the cytochrome b6-f complex, which mediates electron transfer between photosystem II (PSII) and photosystem I (PSI), cyclic electron flow around PSI, and state transitions. PetL is important for photoautotrophic growth as well as for electron transfer efficiency and stability of the cytochrome b6-f complex. This is Cytochrome b6-f complex subunit 6 from Magnolia grandiflora (Southern magnolia).